Consider the following 235-residue polypeptide: Serine protease SplA (235 aa).

A signal peptide spans 1-35 (MNKNVMIKGLTALTILTSLGFAENISDQPHSIAKA). Residues His-74, Asp-113, and Ser-189 each act as charge relay system in the active site.

It belongs to the peptidase S1B family.

It is found in the secreted. The polypeptide is Serine protease SplA (splA) (Staphylococcus aureus).